Here is a 185-residue protein sequence, read N- to C-terminus: Threonylcarbamoyl-AMP synthase (185 aa).

The 182-residue stretch at 4–185 (SWRVQQAAQN…IATGQVMRAG (182 aa)) folds into the YrdC-like domain.

Belongs to the SUA5 family. TsaC subfamily.

Its subcellular location is the cytoplasm. The catalysed reaction is L-threonine + hydrogencarbonate + ATP = L-threonylcarbamoyladenylate + diphosphate + H2O. Required for the formation of a threonylcarbamoyl group on adenosine at position 37 (t(6)A37) in tRNAs that read codons beginning with adenine. Catalyzes the conversion of L-threonine, HCO(3)(-)/CO(2) and ATP to give threonylcarbamoyl-AMP (TC-AMP) as the acyladenylate intermediate, with the release of diphosphate. This Pseudomonas syringae pv. tomato (strain ATCC BAA-871 / DC3000) protein is Threonylcarbamoyl-AMP synthase.